The sequence spans 317 residues: tRNA-cytidine(32) 2-sulfurtransferase (317 aa).

Residues 46–51 (SGGKDS) carry the PP-loop motif motif. 3 residues coordinate [4Fe-4S] cluster: Cys-121, Cys-124, and Cys-212.

It belongs to the TtcA family. In terms of assembly, homodimer. Mg(2+) is required as a cofactor. [4Fe-4S] cluster serves as cofactor.

The protein resides in the cytoplasm. It catalyses the reaction cytidine(32) in tRNA + S-sulfanyl-L-cysteinyl-[cysteine desulfurase] + AH2 + ATP = 2-thiocytidine(32) in tRNA + L-cysteinyl-[cysteine desulfurase] + A + AMP + diphosphate + H(+). Its pathway is tRNA modification. In terms of biological role, catalyzes the ATP-dependent 2-thiolation of cytidine in position 32 of tRNA, to form 2-thiocytidine (s(2)C32). The sulfur atoms are provided by the cysteine/cysteine desulfurase (IscS) system. The polypeptide is tRNA-cytidine(32) 2-sulfurtransferase (Shewanella loihica (strain ATCC BAA-1088 / PV-4)).